Here is a 268-residue protein sequence, read N- to C-terminus: Satratoxin biosynthesis SC1 cluster protein 4 (268 aa).

4 helical membrane-spanning segments follow: residues 34 to 54, 78 to 98, 113 to 133, and 145 to 165; these read VWLV…VHIF, LFAI…GLAI, HLAG…IKIV, and AVIW…APIY.

This sequence belongs to the SAT4 family.

It is found in the membrane. It functions in the pathway mycotoxin biosynthesis. Functionally, part of the satratoxin SC1 cluster involved in the biosynthesis of satratoxins, trichothecene mycotoxins that are associated with human food poisonings. Satratoxins are suggested to be made by products of multiple gene clusters (SC1, SC2 and SC3) that encode 21 proteins in all, including polyketide synthases, acetyltransferases, and other enzymes expected to modify the trichothecene skeleton. SC1 encodes 10 proteins, SAT1 to SAT10. The largest are SAT8, which encodes a putative polyketide synthase (PKS) with a conventional non-reducing architecture, and SAT10, a putative protein containing four ankyrin repeats and thus may be involved in protein scaffolding. The putative short-chain reductase SAT3 may assist the PKS in some capacity. SAT6 contains a secretory lipase domain and acts probably as a trichothecene esterase. SAT5 encodes a putative acetyltransferase, and so, with SAT6, may affect endogenous protection from toxicity. The probable transcription factor SAT9 may regulate the expression of the SC1 cluster. SC2 encodes proteins SAT11 to SAT16, the largest of which encodes the putative reducing PKS SAT13. SAT11 is a cytochrome P450 monooxygenase, while SAT14 and SAT16 are probable acetyltransferases. The SC2 cluster may be regulated by the transcription factor SAT15. SC3 is a small cluster that encodes 5 proteins, SAT17 to SAT21. SAT21 is a putative MFS-type transporter which may have a role in exporting secondary metabolites. The four other proteins putatively encoded in SC3 include the taurine hydroxylase-like protein SAT17, the O-methyltransferase SAT18, the acetyltransferase SAT19, and the Cys6-type zinc finger SAT20, the latter being probably involved in regulation of SC3 expression. The chain is Satratoxin biosynthesis SC1 cluster protein 4 from Stachybotrys chartarum (strain CBS 109288 / IBT 7711) (Toxic black mold).